Reading from the N-terminus, the 238-residue chain is Ubiquitin-conjugating enzyme E2 R2 (238 aa).

The UBC core domain occupies 8 to 174 (SSQKALMLEL…IRKQVSATKA (167 aa)). C93 functions as the Glycyl thioester intermediate in the catalytic mechanism. The segment at 98–113 (HPPVDDPQSGELPSER) is important for ubiquitin transfer. The interval 194–238 (TKVPSNDNSSDLLYDDLYDDDIDDEDEEEEDADCYDDDDSGNEES) is disordered. Positions 206–238 (LYDDLYDDDIDDEDEEEEDADCYDDDDSGNEES) are enriched in acidic residues. S233 is modified (phosphoserine; by CK2).

Belongs to the ubiquitin-conjugating enzyme family. Interacts with multiple Cul1-RING E3 ubiquitin-protein ligase complexes, also known as SCF (SKP1-CUL1-F-box protein) complexes, including SCF(FBXW7) and SCF(BTRC). Interacts with multiple Cul2-RING (CRL2) E3 ubiquitin-protein ligase complexes, also known as ECS (Elongin BC-CUL2/5-SOCS-box protein) complexes, including CRL2(FEM1C) and ECS(VHL). When phosphorylated, interacts with beta-TrCP (BTRC).

It catalyses the reaction S-ubiquitinyl-[E1 ubiquitin-activating enzyme]-L-cysteine + [E2 ubiquitin-conjugating enzyme]-L-cysteine = [E1 ubiquitin-activating enzyme]-L-cysteine + S-ubiquitinyl-[E2 ubiquitin-conjugating enzyme]-L-cysteine.. Its pathway is protein modification; protein ubiquitination. Its activity is regulated as follows. Neddylation of CUL2 in the CRL2(FEM1C) E3 ligase complex increases substrate affinity of UBE2R2 and the ubiquitin-transfer rate in the E2-E3 complex. Functionally, E2 ubiquitin-conjugating enzyme that accepts ubiquitin from an E1 ubiquitin-activating protein, and catalyzes its covalent attachment to other proteins by an E3 ubiquitin-protein ligase complex. In vitro catalyzes monoubiquitination and 'Lys-48'-linked polyubiquitination. Works in collaboration with various Cul1-RING and Cul2-RING E3 ligase complexes. May be involved in degradation of katenin. The protein is Ubiquitin-conjugating enzyme E2 R2 (UBE2R2) of Homo sapiens (Human).